Consider the following 79-residue polypeptide: Acyl carrier protein (79 aa).

The Carrier domain maps to 2–77; sequence ESIEQRVKKI…QAVDYINSHG (76 aa). Serine 37 is modified (O-(pantetheine 4'-phosphoryl)serine).

Belongs to the acyl carrier protein (ACP) family. Post-translationally, 4'-phosphopantetheine is transferred from CoA to a specific serine of apo-ACP by AcpS. This modification is essential for activity because fatty acids are bound in thioester linkage to the sulfhydryl of the prosthetic group.

The protein localises to the cytoplasm. It functions in the pathway lipid metabolism; fatty acid biosynthesis. Functionally, carrier of the growing fatty acid chain in fatty acid biosynthesis. The chain is Acyl carrier protein from Bordetella parapertussis (strain 12822 / ATCC BAA-587 / NCTC 13253).